The sequence spans 285 residues: Ribosomal RNA small subunit methyltransferase A (285 aa).

Residues His-27, Leu-29, Gly-54, Glu-75, Asp-100, and Asn-120 each contribute to the S-adenosyl-L-methionine site.

It belongs to the class I-like SAM-binding methyltransferase superfamily. rRNA adenine N(6)-methyltransferase family. RsmA subfamily.

It is found in the cytoplasm. It carries out the reaction adenosine(1518)/adenosine(1519) in 16S rRNA + 4 S-adenosyl-L-methionine = N(6)-dimethyladenosine(1518)/N(6)-dimethyladenosine(1519) in 16S rRNA + 4 S-adenosyl-L-homocysteine + 4 H(+). Functionally, specifically dimethylates two adjacent adenosines (A1518 and A1519) in the loop of a conserved hairpin near the 3'-end of 16S rRNA in the 30S particle. May play a critical role in biogenesis of 30S subunits. The chain is Ribosomal RNA small subunit methyltransferase A from Phenylobacterium zucineum (strain HLK1).